The primary structure comprises 326 residues: Protein C10 (326 aa).

It belongs to the poxviridae C4/C10 protein family.

The chain is Protein C10 from Homo sapiens (Human).